The sequence spans 524 residues: 2-isopropylmalate synthase (524 aa).

A Pyruvate carboxyltransferase domain is found at 12–274; it reads VIIFDTTLRD…WNRIETTMLT (263 aa). The Mn(2+) site is built by Asp-21, His-209, His-211, and Asn-245. The regulatory domain stretch occupies residues 398 to 524; sequence KLMSLTVIAG…EDAPAVAVAG (127 aa).

This sequence belongs to the alpha-IPM synthase/homocitrate synthase family. LeuA type 1 subfamily. Homodimer. Requires Mn(2+) as cofactor.

The protein resides in the cytoplasm. It carries out the reaction 3-methyl-2-oxobutanoate + acetyl-CoA + H2O = (2S)-2-isopropylmalate + CoA + H(+). Its pathway is amino-acid biosynthesis; L-leucine biosynthesis; L-leucine from 3-methyl-2-oxobutanoate: step 1/4. In terms of biological role, catalyzes the condensation of the acetyl group of acetyl-CoA with 3-methyl-2-oxobutanoate (2-ketoisovalerate) to form 3-carboxy-3-hydroxy-4-methylpentanoate (2-isopropylmalate). The sequence is that of 2-isopropylmalate synthase from Rhodopseudomonas palustris (strain ATCC BAA-98 / CGA009).